Reading from the N-terminus, the 633-residue chain is Chaperone protein HtpG (633 aa).

The a; substrate-binding stretch occupies residues 1-345 (MSADTQSETL…SDDLPLNISR (345 aa)). Residues 346 to 562 (EMLQHNPMIS…EYDFGMGMQR (217 aa)) form a b region. Residues 563-633 (LLQAAGHQLP…VRRVNNLLAG (71 aa)) are c.

It belongs to the heat shock protein 90 family. In terms of assembly, homodimer.

The protein resides in the cytoplasm. In terms of biological role, molecular chaperone. Has ATPase activity. The chain is Chaperone protein HtpG from Halorhodospira halophila (strain DSM 244 / SL1) (Ectothiorhodospira halophila (strain DSM 244 / SL1)).